Reading from the N-terminus, the 1058-residue chain is Ubiquitin-like modifier-activating enzyme 1 Y (1058 aa).

The interval methionine 1–serine 22 is disordered. ATP is bound by residues alanine 477, aspartate 503, arginine 514, lysine 527, and aspartate 575–asparagine 576. Cysteine 631 serves as the catalytic Glycyl thioester intermediate.

It belongs to the ubiquitin-activating E1 family. Monomer. As to expression, expressed in testis in A spermatogonia and spermatids but not (or at very low levels) in pachytene spermatocytes. Also expressed in Y-bearing ovaries and at very low levels in adrenal gland.

The enzyme catalyses ATP + ubiquitin + [E1 ubiquitin-activating enzyme]-L-cysteine = AMP + diphosphate + S-ubiquitinyl-[E1 ubiquitin-activating enzyme]-L-cysteine.. It participates in protein modification; protein ubiquitination. Functionally, activates ubiquitin by first adenylating its C-terminal glycine residue with ATP, and thereafter linking this residue to the side chain of a cysteine residue in E1, yielding a ubiquitin-E1 thioester and free AMP. The Y chromosome form could be involved in the survival and proliferation of differentiating spermatogonia. The sequence is that of Ubiquitin-like modifier-activating enzyme 1 Y (Uba1y) from Mus musculus (Mouse).